Reading from the N-terminus, the 183-residue chain is UPF0114 protein HI_0507 (183 aa).

Helical transmembrane passes span 30–50, 68–88, and 150–170; these read LQVP…YKFI, IMLG…LVMV, and TMMW…ALAY.

Belongs to the UPF0114 family.

The protein resides in the cell membrane. The polypeptide is UPF0114 protein HI_0507 (Haemophilus influenzae (strain ATCC 51907 / DSM 11121 / KW20 / Rd)).